The chain runs to 376 residues: UPF0754 membrane protein Sca_1420 (376 aa).

The next 2 membrane-spanning stretches (helical) occupy residues 4–24 (FLVILFMIVIGALIGGITNII) and 356–376 (LLGFLLGGIIGCLQGIIALFV).

This sequence belongs to the UPF0754 family.

Its subcellular location is the cell membrane. This is UPF0754 membrane protein Sca_1420 from Staphylococcus carnosus (strain TM300).